Reading from the N-terminus, the 185-residue chain is Ribosome-recycling factor (185 aa).

Belongs to the RRF family.

Its subcellular location is the cytoplasm. Responsible for the release of ribosomes from messenger RNA at the termination of protein biosynthesis. May increase the efficiency of translation by recycling ribosomes from one round of translation to another. This is Ribosome-recycling factor from Wolbachia sp. subsp. Brugia malayi (strain TRS).